Reading from the N-terminus, the 188-residue chain is Elongation factor P (188 aa).

This sequence belongs to the elongation factor P family.

The protein resides in the cytoplasm. It functions in the pathway protein biosynthesis; polypeptide chain elongation. Involved in peptide bond synthesis. Stimulates efficient translation and peptide-bond synthesis on native or reconstituted 70S ribosomes in vitro. Probably functions indirectly by altering the affinity of the ribosome for aminoacyl-tRNA, thus increasing their reactivity as acceptors for peptidyl transferase. The sequence is that of Elongation factor P from Anaplasma marginale (strain Florida).